Here is a 282-residue protein sequence, read N- to C-terminus: 4-diphosphocytidyl-2-C-methyl-D-erythritol kinase (282 aa).

Residue lysine 12 is part of the active site. Residue proline 95–serine 105 coordinates ATP. The active site involves aspartate 137.

This sequence belongs to the GHMP kinase family. IspE subfamily.

The enzyme catalyses 4-CDP-2-C-methyl-D-erythritol + ATP = 4-CDP-2-C-methyl-D-erythritol 2-phosphate + ADP + H(+). The protein operates within isoprenoid biosynthesis; isopentenyl diphosphate biosynthesis via DXP pathway; isopentenyl diphosphate from 1-deoxy-D-xylulose 5-phosphate: step 3/6. Functionally, catalyzes the phosphorylation of the position 2 hydroxy group of 4-diphosphocytidyl-2C-methyl-D-erythritol. The sequence is that of 4-diphosphocytidyl-2-C-methyl-D-erythritol kinase from Pseudomonas aeruginosa (strain LESB58).